The following is a 910-amino-acid chain: Eukaryotic translation initiation factor 3 subunit C (910 aa).

Residues 1–21 (MSRFFANGSESESESSEEEIQ) are disordered. Over residues 11-20 (SESESSEEEI) the composition is skewed to acidic residues. Ser34, Ser165, Ser176, and Ser185 each carry phosphoserine. Residues 157 to 281 (FREAPDQESE…KRAEDDEDGE (125 aa)) are disordered. Residues 162-186 (DQESEAEDEVVALESDGGDAGDDSD) are compositionally biased toward acidic residues. The segment covering 193 to 207 (EAAPKAVKSAPAKAA) has biased composition (low complexity). A compositionally biased stretch (acidic residues) spans 209–235 (ADDDDSDDSIDWDSDSESETESSDDEN). Positions 240 to 268 (MRERFLKRTTEKEEKDDDKRKDKRKEQKT) are enriched in basic and acidic residues. Positions 639 to 815 (FHMHINLELL…ETVGMHRSEP (177 aa)) constitute a PCI domain. Positions 847-910 (FFQRGNMGNR…QQQVQTIDEE (64 aa)) are disordered. The span at 862 to 874 (NRNQNNQGGNWLG) shows a compositional bias: low complexity. Residues 882-891 (RNRNQRGHHK) are compositionally biased toward basic residues. Positions 895–910 (DRQQQQQQQVQTIDEE) are enriched in low complexity.

The protein belongs to the eIF-3 subunit C family. Component of the eukaryotic translation initiation factor 3 (eIF-3) complex. The eIF-3 complex interacts with pix.

The protein resides in the cytoplasm. In terms of biological role, component of the eukaryotic translation initiation factor 3 (eIF-3) complex, which is involved in protein synthesis of a specialized repertoire of mRNAs and, together with other initiation factors, stimulates binding of mRNA and methionyl-tRNAi to the 40S ribosome. The eIF-3 complex specifically targets and initiates translation of a subset of mRNAs involved in cell proliferation. The protein is Eukaryotic translation initiation factor 3 subunit C of Drosophila sechellia (Fruit fly).